Here is a 98-residue protein sequence, read N- to C-terminus: Integration host factor subunit alpha (98 aa).

The segment at 49–71 (FGNFDLRDKNQRPGRNPKTGEDI) is disordered.

The protein belongs to the bacterial histone-like protein family. In terms of assembly, heterodimer of an alpha and a beta chain.

In terms of biological role, this protein is one of the two subunits of integration host factor, a specific DNA-binding protein that functions in genetic recombination as well as in transcriptional and translational control. The polypeptide is Integration host factor subunit alpha (Shewanella sp. (strain MR-4)).